Here is a 560-residue protein sequence, read N- to C-terminus: 2-succinyl-5-enolpyruvyl-6-hydroxy-3-cyclohexene-1-carboxylate synthase (560 aa).

This sequence belongs to the TPP enzyme family. MenD subfamily. As to quaternary structure, homodimer. It depends on Mg(2+) as a cofactor. Mn(2+) serves as cofactor. Thiamine diphosphate is required as a cofactor.

It carries out the reaction isochorismate + 2-oxoglutarate + H(+) = 5-enolpyruvoyl-6-hydroxy-2-succinyl-cyclohex-3-ene-1-carboxylate + CO2. The protein operates within quinol/quinone metabolism; 1,4-dihydroxy-2-naphthoate biosynthesis; 1,4-dihydroxy-2-naphthoate from chorismate: step 2/7. It functions in the pathway quinol/quinone metabolism; menaquinone biosynthesis. Functionally, catalyzes the thiamine diphosphate-dependent decarboxylation of 2-oxoglutarate and the subsequent addition of the resulting succinic semialdehyde-thiamine pyrophosphate anion to isochorismate to yield 2-succinyl-5-enolpyruvyl-6-hydroxy-3-cyclohexene-1-carboxylate (SEPHCHC). The chain is 2-succinyl-5-enolpyruvyl-6-hydroxy-3-cyclohexene-1-carboxylate synthase from Pectobacterium atrosepticum (strain SCRI 1043 / ATCC BAA-672) (Erwinia carotovora subsp. atroseptica).